The chain runs to 71 residues: Heat-stable enterotoxin A (71 aa).

Residues 1 to 19 (MKKIVFVLVLMLSSFGAFG) form the signal peptide. Positions 20-53 (QETVSGQFSDALSTPITAEVYKQACDPPLPPAEV) are excised as a propeptide. Disulfide bonds link Cys-59–Cys-64, Cys-60–Cys-68, and Cys-63–Cys-71.

This sequence belongs to the heat-stable enterotoxin family.

The protein localises to the secreted. Functionally, toxin which activates the particulate form of guanylate cyclase and increases cyclic GMP levels within the host intestinal epithelial cells. This Yersinia enterocolitica protein is Heat-stable enterotoxin A (ystA).